A 446-amino-acid chain; its full sequence is Probable glycine dehydrogenase (decarboxylating) subunit 1 (446 aa).

It belongs to the GcvP family. N-terminal subunit subfamily. The glycine cleavage system is composed of four proteins: P, T, L and H. In this organism, the P 'protein' is a heterodimer of two subunits.

It catalyses the reaction N(6)-[(R)-lipoyl]-L-lysyl-[glycine-cleavage complex H protein] + glycine + H(+) = N(6)-[(R)-S(8)-aminomethyldihydrolipoyl]-L-lysyl-[glycine-cleavage complex H protein] + CO2. The glycine cleavage system catalyzes the degradation of glycine. The P protein binds the alpha-amino group of glycine through its pyridoxal phosphate cofactor; CO(2) is released and the remaining methylamine moiety is then transferred to the lipoamide cofactor of the H protein. This chain is Probable glycine dehydrogenase (decarboxylating) subunit 1, found in Coxiella burnetii (strain CbuK_Q154) (Coxiella burnetii (strain Q154)).